Here is a 344-residue protein sequence, read N- to C-terminus: Arylacetonitrilase (344 aa).

Positions 5–290 (LRVAVTQAEP…EGIVYADLDL (286 aa)) constitute a CN hydrolase domain. Residue glutamate 45 is the Proton acceptor of the active site. Residue lysine 126 is part of the active site. The active-site Nucleophile is cysteine 167. A disordered region spans residues 324–344 (VIPRDEEEPSRKANVVVPKQE).

It belongs to the carbon-nitrogen hydrolase superfamily. Nitrilase family.

It catalyses the reaction a nitrile + 2 H2O = a carboxylate + NH4(+). The enzyme catalyses 4-chlorophenylacetonitrile + 2 H2O = 4-chlorophenylacetate + NH4(+). Its function is as follows. Nitrilase that hydrolyzes preferentially phenylacetonitrile and (R,S)-mandelonitrile. Also acts on dinitriles like phenylenediacetonitriles (PDAs) 1,2-PDA, 1,3-PDA, and 1,4-PDA, and cyanophenyl acetonitriles (CPAs) 2-CPA and 4-CPA. In Macrophomina phaseolina (strain MS6) (Charcoal rot fungus), this protein is Arylacetonitrilase.